The following is a 330-amino-acid chain: PDZ and LIM domain protein 4 (330 aa).

In terms of domain architecture, PDZ spans 8-84 (RGPSPWGFRL…QLLLSVSRAE (77 aa)). Disordered regions lie at residues 106–152 (EPEP…SSSA) and 163–182 (LHIS…RNRN). Polar residues predominate over residues 139–152 (QHPQPSRPHASSSA). One can recognise an LIM zinc-binding domain in the interval 255–305 (CTRCGNGIVGTIVKARDKLYHPECFMCDDCGLNLKQRGYFFIEEQLYCETH).

In terms of assembly, interacts (via LIM domain) with PTPN13. Interacts (via PDZ domain) with ACTN1.

The protein resides in the cytoplasm. It is found in the cytoskeleton. It localises to the cell projection. Its subcellular location is the dendritic spine. The protein localises to the early endosome membrane. The protein resides in the recycling endosome membrane. It is found in the nucleus. It localises to the perinuclear region. Its subcellular location is the lamellipodium. The protein localises to the synapse. The protein resides in the synaptosome. Its function is as follows. Suppresses SRC activation by recognizing and binding to active SRC and facilitating PTPN13-mediated dephosphorylation of SRC 'Tyr-419' leading to its inactivation. Inactivated SRC dissociates from this protein allowing the initiation of a new SRC inactivation cycle. Involved in reorganization of the actin cytoskeleton. In nonmuscle cells, binds to ACTN1 (alpha-actinin-1), increases the affinity of ACTN1 to F-actin (filamentous actin), and promotes formation of actin stress fibers. Involved in regulation of the synaptic AMPA receptor transport in dendritic spines of hippocampal pyramidal neurons directing the receptors toward an insertion at the postsynaptic membrane. Links endosomal surface-internalized GRIA1-containing AMPA receptors to the alpha-actinin/actin cytoskeleton. Increases AMPA receptor-mediated excitatory postsynaptic currents in neurons. The protein is PDZ and LIM domain protein 4 (PDLIM4) of Gallus gallus (Chicken).